We begin with the raw amino-acid sequence, 523 residues long: Metalloendopeptidase OMA1, mitochondrial (523 aa).

The transit peptide at 1–45 (MSFIYGLQSAARNCFFFRFNLLTNWRKCNTQAVTSRDFHQVKINH) directs the protein to the mitochondrion. Residues 46 to 143 (IVNKSLGLGV…RSFHTSPRCQ (98 aa)) constitute a propeptide that is removed on maturation. At 144–195 (AAPAPLLLMILKPAQKLLAIIVGRGIRKWWQALPPNKKELFKESLRKNKWKL) the chain is on the mitochondrial matrix side. The interval 148-167 (PLLLMILKPAQKLLAIIVGR) is cardiolipin-binding. The tract at residues 165–195 (VGRGIRKWWQALPPNKKELFKESLRKNKWKL) is stress-sensor region. A helical membrane pass occupies residues 196–216 (FLGLSSFGLLFVVFYFTHLEV). H327 contacts Zn(2+). E328 is an active-site residue. Zn(2+) contacts are provided by H331 and E392. C407 and C465 are disulfide-bonded.

This sequence belongs to the peptidase M48 family. Homooligomer. Zn(2+) is required as a cofactor. Post-translationally, autocatalytically cleaved in response to mitochondrial depolarization both at the N-terminus and C-terminus to generate the short active form (S-OMA1). Autocatalytic processing at the C-terminus takes place at residues 447-456. The S-OMA1 form is unstable. OMA1 pre-processing by AFG3L2 may participate in maturation before OMA1 autocatalytic cleavage. Degraded by YMEL1 in response to membrane depolarization. Protein turnover is regulated by prohibitin (PHB and PHB2), which promotes degradation of OMA1 in a cardiolipin-binding manner. May form a redox-dependent disulfide bond. Exists in a semi-oxidized state and is activated by prolonged hypoxia.

It is found in the mitochondrion inner membrane. Its activity is regulated as follows. Protease activity is activated upon autocatalytic cleavage in response to mitochondrial depolarization. Metalloprotease that is part of the quality control system in the inner membrane of mitochondria. Activated in response to various mitochondrial stress, leading to the proteolytic cleavage of target proteins, such as OPA1, UQCC3 and DELE1. Involved in the fusion of the mitochondrial inner membranes by mediating cleavage of OPA1 at S1 position, generating the soluble OPA1 (S-OPA1), which cooperates with the membrane form (L-OPA1) to coordinate the fusion of mitochondrial inner membranes. Following stress conditions that induce loss of mitochondrial membrane potential, mediates cleavage of OPA1, leading to excess production of soluble OPA1 (S-OPA1) and negative regulation of mitochondrial fusion. Involved in mitochondrial safeguard in response to transient mitochondrial membrane depolarization (flickering) by catalyzing cleavage of OPA1, leading to excess production of S-OPA1, preventing mitochondrial hyperfusion. Also acts as a regulator of apoptosis: upon BAK and BAX aggregation, mediates cleavage of OPA1, leading to the remodeling of mitochondrial cristae and allowing the release of cytochrome c from mitochondrial cristae. In depolarized mitochondria, may also act as a backup protease for PINK1 by mediating PINK1 cleavage and promoting its subsequent degradation by the proteasome. May also cleave UQCC3 in response to mitochondrial depolarization. Also acts as an activator of the integrated stress response (ISR): in response to mitochondrial stress, mediates cleavage of DELE1 to generate the processed form of DELE1 (S-DELE1), which translocates to the cytosol and activates EIF2AK1/HRI to trigger the ISR. Its role in mitochondrial quality control is essential for regulating lipid metabolism as well as to maintain body temperature and energy expenditure under cold-stress conditions. Binds cardiolipin, possibly regulating its protein turnover. Required for the stability of the respiratory supercomplexes. The sequence is that of Metalloendopeptidase OMA1, mitochondrial from Bos taurus (Bovine).